Consider the following 335-residue polypeptide: MEQPWPPPGPWSFPRTGGETEEESDLDVSPSSSHYSPVPDGGAQMYSHGIELACQKQKEFVKSSVACKWNLAEAQQKLGSLALHNSESLDQEHAKAQTAVSELRQREEEWRQKEEALVQRERMCLWNMDAISKDVFNKSFINQDKRKTEEEDKSQSFMQKYEQKIRHFGMLSRWDDSQRFLSDHPHLVCEETAKYLILWCFHLEAEQKGALMEQIAHQAVVMQFIMEMAKNCNVDPRGCFRLFFQKAKAEEEGYFEAFKNELEAFKSRVRLYAQSQSLQPVTVQNHVPHSGVGCIGSLESLPQNPDSLQCCTPAPLCSVDSVVHKEDDDRMMDTV.

Over residues 1-11 the composition is skewed to pro residues; sequence MEQPWPPPGPW. The segment at 1 to 42 is disordered; sequence MEQPWPPPGPWSFPRTGGETEEESDLDVSPSSSHYSPVPDGG. The tract at residues 2–170 is self-association; the sequence is EQPWPPPGPW…YEQKIRHFGM (169 aa). The segment covering 27 to 40 has biased composition (low complexity); it reads DVSPSSSHYSPVPD. Residues Ser32 and Ser88 each carry the phosphoserine modification. Residues 84-120 adopt a coiled-coil conformation; that stretch reads HNSESLDQEHAKAQTAVSELRQREEEWRQKEEALVQR. The self-association and interaction with Hsp90 stretch occupies residues 147–276; sequence KTEEEDKSQS…SRVRLYAQSQ (130 aa). The segment at 266–335 is interaction with Hsp70; sequence KSRVRLYAQS…EDDDRMMDTV (70 aa). The tract at residues 277–335 is required for interaction with STIP1; the sequence is SLQPVTVQNHVPHSGVGCIGSLESLPQNPDSLQCCTPAPLCSVDSVVHKEDDDRMMDTV.

This sequence belongs to the CDC37 family. As to quaternary structure, self-associates. Forms complexes with Hsp70 and Hsp90. Interacts with CDC37, FKBP4, PPID and STIP1.

Its subcellular location is the cytoplasm. In terms of biological role, co-chaperone that binds to numerous proteins and promotes their interaction with Hsp70 and Hsp90. The sequence is that of Hsp90 co-chaperone Cdc37-like 1 (Cdc37l1) from Mus musculus (Mouse).